Reading from the N-terminus, the 228-residue chain is Octanoyltransferase (228 aa).

In terms of domain architecture, BPL/LPL catalytic spans 31-212 (GETDGILILL…KFSEVFGIHF (182 aa)). Residues 76–83 (RGGKITFH), 143–145 (AIG), and 156–158 (GIA) each bind substrate. Cys-174 (acyl-thioester intermediate) is an active-site residue.

It belongs to the LipB family.

The protein localises to the cytoplasm. It carries out the reaction octanoyl-[ACP] + L-lysyl-[protein] = N(6)-octanoyl-L-lysyl-[protein] + holo-[ACP] + H(+). Its pathway is protein modification; protein lipoylation via endogenous pathway; protein N(6)-(lipoyl)lysine from octanoyl-[acyl-carrier-protein]: step 1/2. Functionally, catalyzes the transfer of endogenously produced octanoic acid from octanoyl-acyl-carrier-protein onto the lipoyl domains of lipoate-dependent enzymes. Lipoyl-ACP can also act as a substrate although octanoyl-ACP is likely to be the physiological substrate. This is Octanoyltransferase from Thermoanaerobacter sp. (strain X514).